The primary structure comprises 206 residues: Large ribosomal subunit protein uL4 (206 aa).

This sequence belongs to the universal ribosomal protein uL4 family. In terms of assembly, part of the 50S ribosomal subunit.

In terms of biological role, one of the primary rRNA binding proteins, this protein initially binds near the 5'-end of the 23S rRNA. It is important during the early stages of 50S assembly. It makes multiple contacts with different domains of the 23S rRNA in the assembled 50S subunit and ribosome. Forms part of the polypeptide exit tunnel. The sequence is that of Large ribosomal subunit protein uL4 from Desulfatibacillum aliphaticivorans.